Consider the following 445-residue polypeptide: Tubulin beta-4B chain (445 aa).

The MREI motif signature appears at 1–4; the sequence is MREI. GTP is bound at residue Q11. T55 is subject to Phosphothreonine. Position 58 is an N6-acetyllysine (K58). Positions 69, 138, 142, 143, and 144 each coordinate GTP. A Mg(2+)-binding site is contributed by E69. Residue S172 is modified to Phosphoserine; by CDK1. GTP contacts are provided by N204 and N226. A disordered region spans residues 426-445; sequence QDATAEEEGEFEEEAEEEVA. Acidic residues predominate over residues 429 to 445; sequence TAEEEGEFEEEAEEEVA. Position 438 is a 5-glutamyl polyglutamate (E438).

The protein belongs to the tubulin family. Dimer of alpha and beta chains. A typical microtubule is a hollow water-filled tube with an outer diameter of 25 nm and an inner diameter of 15 nM. Alpha-beta heterodimers associate head-to-tail to form protofilaments running lengthwise along the microtubule wall with the beta-tubulin subunit facing the microtubule plus end conferring a structural polarity. Microtubules usually have 13 protofilaments but different protofilament numbers can be found in some organisms and specialized cells. Component of sperm flagellar doublet microtubules. Mg(2+) is required as a cofactor. In terms of processing, some glutamate residues at the C-terminus are polyglycylated, resulting in polyglycine chains on the gamma-carboxyl group. Glycylation is mainly limited to tubulin incorporated into axonemes (cilia and flagella) whereas glutamylation is prevalent in neuronal cells, centrioles, axonemes, and the mitotic spindle. Both modifications can coexist on the same protein on adjacent residues, and lowering polyglycylation levels increases polyglutamylation, and reciprocally. Cilia and flagella glycylation is required for their stability and maintenance. Flagella glycylation controls sperm motility. Post-translationally, some glutamate residues at the C-terminus are polyglutamylated, resulting in polyglutamate chains on the gamma-carboxyl group. Polyglutamylation plays a key role in microtubule severing by spastin (SPAST). SPAST preferentially recognizes and acts on microtubules decorated with short polyglutamate tails: severing activity by SPAST increases as the number of glutamates per tubulin rises from one to eight, but decreases beyond this glutamylation threshold. Glutamylation is also involved in cilia motility. Phosphorylated on Ser-172 by CDK1 during the cell cycle, from metaphase to telophase, but not in interphase. This phosphorylation inhibits tubulin incorporation into microtubules.

Its subcellular location is the cytoplasm. It localises to the cytoskeleton. It is found in the flagellum axoneme. Tubulin is the major constituent of microtubules, a cylinder consisting of laterally associated linear protofilaments composed of alpha- and beta-tubulin heterodimers. Microtubules grow by the addition of GTP-tubulin dimers to the microtubule end, where a stabilizing cap forms. Below the cap, tubulin dimers are in GDP-bound state, owing to GTPase activity of alpha-tubulin. The polypeptide is Tubulin beta-4B chain (TUBB4B) (Bos taurus (Bovine)).